We begin with the raw amino-acid sequence, 103 residues long: uncharacterized protein (103 aa).

This is an uncharacterized protein from Microplitis demolitor (Parasitoid wasp).